Here is a 307-residue protein sequence, read N- to C-terminus: UDP-3-O-acyl-N-acetylglucosamine deacetylase (307 aa).

3 residues coordinate Zn(2+): His78, His241, and Asp245. The active-site Proton donor is the His268.

It belongs to the LpxC family. The cofactor is Zn(2+).

It catalyses the reaction a UDP-3-O-[(3R)-3-hydroxyacyl]-N-acetyl-alpha-D-glucosamine + H2O = a UDP-3-O-[(3R)-3-hydroxyacyl]-alpha-D-glucosamine + acetate. It functions in the pathway glycolipid biosynthesis; lipid IV(A) biosynthesis; lipid IV(A) from (3R)-3-hydroxytetradecanoyl-[acyl-carrier-protein] and UDP-N-acetyl-alpha-D-glucosamine: step 2/6. Functionally, catalyzes the hydrolysis of UDP-3-O-myristoyl-N-acetylglucosamine to form UDP-3-O-myristoylglucosamine and acetate, the committed step in lipid A biosynthesis. In Delftia acidovorans (strain DSM 14801 / SPH-1), this protein is UDP-3-O-acyl-N-acetylglucosamine deacetylase.